We begin with the raw amino-acid sequence, 300 residues long: Uricase (300 aa).

N-acetylalanine is present on alanine 2. An N6-acetyllysine; alternate mark is found at lysine 6 and lysine 19. Lysine 6 and lysine 19 each carry N6-succinyllysine; alternate. Lysine 19 (charge relay system) is an active-site residue. Residues lysine 23 and lysine 32 each carry the N6-acetyllysine modification. A phosphoserine mark is found at serine 35 and serine 59. Threonine 64 serves as the catalytic Charge relay system. Residues threonine 64 and aspartate 65 each contribute to the urate site. N6-acetyllysine occurs at positions 114, 118, and 160. Phenylalanine 166 lines the urate pocket. An N6-acetyllysine mark is found at lysine 171 and lysine 181. Arginine 183 provides a ligand contact to urate. N6-acetyllysine; alternate occurs at positions 217 and 224. N6-succinyllysine; alternate is present on residues lysine 217 and lysine 224. Residue serine 228 is modified to Phosphoserine. Urate is bound by residues valine 231, glutamine 232, and asparagine 258. The Charge relay system role is filled by histidine 260. Lysine 274 bears the N6-acetyllysine mark. Residue tyrosine 285 is modified to Phosphotyrosine. The Microbody targeting signal motif lies at 298-300 (SRL).

Belongs to the uricase family.

It localises to the peroxisome. It catalyses the reaction urate + O2 + H2O = 5-hydroxyisourate + H2O2. It functions in the pathway purine metabolism; urate degradation; (S)-allantoin from urate: step 1/3. Catalyzes the oxidation of uric acid to 5-hydroxyisourate, which is further processed to form (S)-allantoin. The sequence is that of Uricase (UOX) from Oryctolagus cuniculus (Rabbit).